Here is a 143-residue protein sequence, read N- to C-terminus: Mini-ribonuclease 3 (143 aa).

The active site involves D35.

It belongs to the MrnC RNase family. In terms of assembly, homodimer. It depends on Mg(2+) as a cofactor.

The protein resides in the cytoplasm. Involved in correct processing of both the 5' and 3' ends of 23S rRNA precursor. Processes 30S rRNA precursor transcript even in absence of ribonuclease 3 (Rnc); Rnc processes 30S rRNA into smaller rRNA precursors. This Synechocystis sp. (strain ATCC 27184 / PCC 6803 / Kazusa) protein is Mini-ribonuclease 3.